Consider the following 339-residue polypeptide: Ketol-acid reductoisomerase (NADP(+)) (339 aa).

Residues 1–182 form the KARI N-terminal Rossmann domain; that stretch reads MRVYYDRDAD…GGGRAGIIET (182 aa). NADP(+)-binding positions include 24–27, Arg48, Ser51, Thr53, and 83–86; these read YGSQ and DELQ. His108 is an active-site residue. Residue Gly134 coordinates NADP(+). Residues 183 to 328 form the KARI C-terminal knotted domain; sequence TFKEECETDL…AKLRGMMPWI (146 aa). Mg(2+) is bound by residues Asp191, Glu195, Glu227, and Glu231. A substrate-binding site is contributed by Ser252.

This sequence belongs to the ketol-acid reductoisomerase family. Mg(2+) is required as a cofactor.

It catalyses the reaction (2R)-2,3-dihydroxy-3-methylbutanoate + NADP(+) = (2S)-2-acetolactate + NADPH + H(+). The catalysed reaction is (2R,3R)-2,3-dihydroxy-3-methylpentanoate + NADP(+) = (S)-2-ethyl-2-hydroxy-3-oxobutanoate + NADPH + H(+). The protein operates within amino-acid biosynthesis; L-isoleucine biosynthesis; L-isoleucine from 2-oxobutanoate: step 2/4. It functions in the pathway amino-acid biosynthesis; L-valine biosynthesis; L-valine from pyruvate: step 2/4. Involved in the biosynthesis of branched-chain amino acids (BCAA). Catalyzes an alkyl-migration followed by a ketol-acid reduction of (S)-2-acetolactate (S2AL) to yield (R)-2,3-dihydroxy-isovalerate. In the isomerase reaction, S2AL is rearranged via a Mg-dependent methyl migration to produce 3-hydroxy-3-methyl-2-ketobutyrate (HMKB). In the reductase reaction, this 2-ketoacid undergoes a metal-dependent reduction by NADPH to yield (R)-2,3-dihydroxy-isovalerate. The chain is Ketol-acid reductoisomerase (NADP(+)) from Methylorubrum extorquens (strain CM4 / NCIMB 13688) (Methylobacterium extorquens).